Consider the following 206-residue polypeptide: Cytochrome c oxidase subunit 3 (206 aa).

A run of 5 helical transmembrane segments spans residues 26–46 (FLGF…FFGT), 68–88 (LVFI…LAMF), 97–117 (AMMI…GFEI), 143–163 (LVGL…VLLI), and 185–205 (WHFI…MGVG).

Belongs to the cytochrome c oxidase subunit 3 family.

It is found in the cell membrane. The catalysed reaction is 4 Fe(II)-[cytochrome c] + O2 + 8 H(+)(in) = 4 Fe(III)-[cytochrome c] + 2 H2O + 4 H(+)(out). In Alkalihalophilus pseudofirmus (strain ATCC BAA-2126 / JCM 17055 / OF4) (Bacillus pseudofirmus), this protein is Cytochrome c oxidase subunit 3 (ctaE).